The chain runs to 121 residues: Large ribosomal subunit protein uL14c (121 aa).

Belongs to the universal ribosomal protein uL14 family. In terms of assembly, part of the 50S ribosomal subunit.

It is found in the plastid. The protein resides in the chloroplast. Functionally, binds to 23S rRNA. This chain is Large ribosomal subunit protein uL14c, found in Phaeodactylum tricornutum (strain CCAP 1055/1).